The sequence spans 258 residues: MDDVLISYCVVTGSFLGFQLLFSAISPRLFTKYSSTYRQLSFGKQCEWDSRFVSTNHALIVGSACLYILAYDDAVNADPIWGDPFWVKMNVAITCGYLVQDLLLLARFWKVMRDPYMVCHHLAVFYSYGYVLNRGVLPYFANFRLISELSTPFVNQRWFFDVIGKPRSSWPVLLNGLAMALVFFIVRIAVIPSYYSQVFATFGTEGYIRLGIGPQVAWIVSCVVLDILNVFWMYKIARGFYKVVKAKPDGKPRRNHAD.

The next 6 helical transmembrane spans lie at 5-25 (LISY…FSAI), 52-72 (FVST…LAYD), 85-105 (FWVK…LLLL), 116-132 (YMVC…GYVL), 171-191 (PVLL…IAVI), and 212-232 (IGPQ…NVFW). The 203-residue stretch at 43–245 (GKQCEWDSRF…IARGFYKVVK (203 aa)) folds into the TLC domain.

The protein belongs to the TLCD4 family.

It localises to the membrane. The polypeptide is TLC domain-containing protein 4-A (tlcd4-a) (Xenopus laevis (African clawed frog)).